The primary structure comprises 220 residues: MPLTGVGPGSCRRQIIRALCLLLLLLHAGSAKNIWKRALPARLAEKSRAEEAGAPGGPRQPRADRCPPPPRTLPPGACQAARCQADSECPRHRRCCYNGCAYACLEAVPPPPVLDWLVQPKPRWLGGNGWLLDGPEEVLQAEACSTTEDGAEPLLCPSGYECHILSPGDVAEGIPNRGQCVKQRRQADGRILRHKLYKEYPEGDSKNVAEPGRGQQKHFQ.

Residues 1-31 (MPLTGVGPGSCRRQIIRALCLLLLLLHAGSA) form the signal peptide. Positions 46 to 70 (KSRAEEAGAPGGPRQPRADRCPPPP) are disordered. Residues 59-108 (RQPRADRCPPPPRTLPPGACQAARCQADSECPRHRRCCYNGCAYACLEAV) enclose the WAP domain. Cystine bridges form between Cys66/Cys96, Cys78/Cys100, Cys83/Cys95, and Cys89/Cys104. Positions 199–220 (EYPEGDSKNVAEPGRGQQKHFQ) are disordered.

It is found in the secreted. In terms of biological role, has growth inhibitory activity. This is WAP four-disulfide core domain protein 1 (WFDC1) from Homo sapiens (Human).